Reading from the N-terminus, the 330-residue chain is AH receptor-interacting protein (330 aa).

A PPIase FKBP-type domain is found at 31 to 121 (GTKATFHFRT…KDPLEGQRHC (91 aa)). Ser-43 carries the post-translational modification Phosphoserine. TPR repeat units follow at residues 179–212 (VPLIHQEGNRLYREGQVKEAAAKYYDAIACLKNL), 231–264 (TPLLLNYCQCKLVAQEYYEVLDHCSSILNKYDDN), and 265–298 (VKAYFKRGKAHAAVWNAQEAQADFAKVLELDPAL).

In terms of assembly, interacts with RET in the pituitary gland; this interaction prevents the formation of the AIP-survivin complex.

The protein resides in the cytoplasm. Functionally, may play a positive role in AHR-mediated (aromatic hydrocarbon receptor) signaling, possibly by influencing its receptivity for ligand and/or its nuclear targeting. In Rattus norvegicus (Rat), this protein is AH receptor-interacting protein (Aip).